The chain runs to 80 residues: Small ribosomal subunit protein bS18 (80 aa).

Belongs to the bacterial ribosomal protein bS18 family. As to quaternary structure, part of the 30S ribosomal subunit. Forms a tight heterodimer with protein bS6.

Functionally, binds as a heterodimer with protein bS6 to the central domain of the 16S rRNA, where it helps stabilize the platform of the 30S subunit. The protein is Small ribosomal subunit protein bS18 of Staphylococcus saprophyticus subsp. saprophyticus (strain ATCC 15305 / DSM 20229 / NCIMB 8711 / NCTC 7292 / S-41).